Here is a 98-residue protein sequence, read N- to C-terminus: Citrate lyase acyl carrier protein (98 aa).

Ser14 bears the O-(phosphoribosyl dephospho-coenzyme A)serine mark.

The protein belongs to the CitD family. In terms of assembly, oligomer with a subunit composition of (alpha,beta,gamma)6.

It is found in the cytoplasm. Functionally, covalent carrier of the coenzyme of citrate lyase. The polypeptide is Citrate lyase acyl carrier protein (Shigella flexneri).